Reading from the N-terminus, the 206-residue chain is Somatotropin (206 aa).

An N-terminal signal peptide occupies residues 1–18 (MLDRVVVLLSVLCLGVSS). Pyrrolidone carboxylic acid is present on Q19. Zn(2+) is bound at residue H37. A disulfide bridge connects residues C70 and C179. E188 serves as a coordination point for Zn(2+). C196 and C204 form a disulfide bridge.

Belongs to the somatotropin/prolactin family.

It localises to the secreted. In terms of biological role, growth hormone plays an important role in growth control and is involved in the regulation of several anabolic processes. Implicated as an osmoregulatory substance important for seawater adaptation. The chain is Somatotropin (gh) from Pseudocaranx dentex (White trevally).